Consider the following 607-residue polypeptide: Actin-related protein 5 (607 aa).

Residue Lys-283 forms a Glycyl lysine isopeptide (Lys-Gly) (interchain with G-Cter in SUMO2) linkage. Coiled coils occupy residues 288-327 and 355-384; these read TLTSEEKQERRQQQLRRLQELNARRREEKLQLDQERLDRL and EELQSYIQKLSIAVEQAKQKILQAEVNLEV. A compositionally biased stretch (low complexity) spans 584-596; it reads SRSSDAQASSKGS. The disordered stretch occupies residues 584–607; sequence SRSSDAQASSKGSAAGGGGAGEQA. The segment covering 597–607 has biased composition (gly residues); it reads AAGGGGAGEQA.

It belongs to the actin family. ARP5 subfamily. As to quaternary structure, component of the chromatin remodeling INO80 complex; specifically part of a complex module associated with the helicase ATP-binding and the helicase C-terminal domain of INO80. Interacts with DDB1. Interacts with ACTR8; the interaction is observed in asynchronous (interphase) cells but not in metaphase-arrested cells indicative for a possible dissociation of the INO80 complex in mitotic cells.

It is found in the nucleus. Its subcellular location is the cytoplasm. Its function is as follows. Proposed core component of the chromatin remodeling INO80 complex which is involved in transcriptional regulation, DNA replication and probably DNA repair. Involved in DNA double-strand break repair and UV-damage excision repair. The sequence is that of Actin-related protein 5 (ACTR5) from Homo sapiens (Human).